The chain runs to 130 residues: Small ribosomal subunit protein uS11 (130 aa).

It belongs to the universal ribosomal protein uS11 family. As to quaternary structure, part of the 30S ribosomal subunit. Interacts with proteins S7 and S18. Binds to IF-3.

Its function is as follows. Located on the platform of the 30S subunit, it bridges several disparate RNA helices of the 16S rRNA. Forms part of the Shine-Dalgarno cleft in the 70S ribosome. The polypeptide is Small ribosomal subunit protein uS11 (Moorella thermoacetica (strain ATCC 39073 / JCM 9320)).